Here is a 154-residue protein sequence, read N- to C-terminus: Small ribosomal subunit protein uS15 (154 aa).

Residues 1–14 are compositionally biased toward basic residues; the sequence is MAPVPHRSRHKKGR. The interval 1 to 24 is disordered; that stretch reads MAPVPHRSRHKKGRSGSVRPAHPT.

This sequence belongs to the universal ribosomal protein uS15 family. As to quaternary structure, part of the 30S ribosomal subunit.

The polypeptide is Small ribosomal subunit protein uS15 (Pyrobaculum arsenaticum (strain DSM 13514 / JCM 11321 / PZ6)).